The following is a 216-amino-acid chain: Heart- and neural crest derivatives-expressed protein 1 (216 aa).

Disordered stretches follow at residues 1–20 (MNLVGSYAHHHHHHHSHPPH), 53–109 (APDF…RTES), and 165–203 (ELKKTDGGRESKRKRELPQQPESFPPASGPGEKRIKGRT). The span at 8-18 (AHHHHHHHSHP) shows a compositional bias: basic residues. A compositionally biased stretch (low complexity) spans 65–78 (TAVAAAAYGPDARP). Basic residues predominate over residues 92–104 (LPKRKGSGPKKER). Residues 94-146 (KRKGSGPKKERRRTESINSAFAELRECIPNVPADTKLSKIKTLRLATSYIAYL) form the bHLH domain. T107 is subject to Phosphothreonine; by PLK4. S109 carries the phosphoserine; by PLK4 modification. Residues 165–174 (ELKKTDGGRE) show a composition bias toward basic and acidic residues.

As to quaternary structure, efficient DNA binding requires dimerization with another bHLH protein. Forms homodimers and heterodimers with TCF3 gene products E12 and E47, HAND2 and HEY1, HEY2 and HEYL (hairy-related transcription factors). Interacts with MDFIC. Interacts with SOX15; the interaction enhances HAND1-induced differentiation of trophoblast giant cells. Post-translationally, phosphorylation by PLK4 disrupts the interaction with MDFIC and leads to translocation into the nucleoplasm, allowing dimerization and transcription factor activity. In terms of tissue distribution, smooth muscle cells of the gut and adrenal tissue.

The protein resides in the nucleus. It localises to the nucleoplasm. Its subcellular location is the nucleolus. In terms of biological role, transcription factor that plays an essential role in both trophoblast giant cell differentiation and in cardiac morphogenesis. Binds the DNA sequence 5'-NRTCTG-3' (non-canonical E-box). Acts as a transcriptional repressor of SOX15. In the adult, could be required for ongoing expression of cardiac-specific genes. This Mus musculus (Mouse) protein is Heart- and neural crest derivatives-expressed protein 1 (Hand1).